Consider the following 147-residue polypeptide: Hemoglobin subunit delta (147 aa).

In terms of domain architecture, Globin spans 3 to 147 (HLTPDEKNAV…VATALAHKYH (145 aa)). Serine 51 is modified (phosphoserine). Residues histidine 64 and histidine 93 each coordinate heme b.

The protein belongs to the globin family. Heterotetramer of two delta chains and two alpha chains. As to expression, red blood cells.

This Otolemur crassicaudatus (Brown greater galago) protein is Hemoglobin subunit delta (HBD).